The chain runs to 193 residues: Interleukin-18-binding protein (193 aa).

The signal sequence occupies residues 1 to 28 (MTMRHCWTAGPSSWWVLLLYVHVILARA). One can recognise an Ig-like C2-type domain in the interval 60–161 (PALDVIWPEK…QVAQYHIILA (102 aa)). Asn-74, Asn-98, Asn-120, and Asn-142 each carry an N-linked (GlcNAc...) asparagine glycan. Cys-81 and Cys-145 are oxidised to a cystine. The span at 172-185 (SPSQETLSSHSPVS) shows a compositional bias: polar residues. Residues 172 to 193 (SPSQETLSSHSPVSRSAGPGVA) are disordered.

It localises to the secreted. Binds to IL-18 and inhibits its activity. Functions as an inhibitor of the early TH1 cytokine response. The chain is Interleukin-18-binding protein (Il18bp) from Mus musculus (Mouse).